Consider the following 106-residue polypeptide: Integration host factor subunit alpha (106 aa).

The protein belongs to the bacterial histone-like protein family. Heterodimer of an alpha and a beta chain.

Functionally, this protein is one of the two subunits of integration host factor, a specific DNA-binding protein that functions in genetic recombination as well as in transcriptional and translational control. This chain is Integration host factor subunit alpha, found in Nitrobacter winogradskyi (strain ATCC 25391 / DSM 10237 / CIP 104748 / NCIMB 11846 / Nb-255).